The following is a 407-amino-acid chain: Putative metabolite transport protein HI_1104 (407 aa).

Topologically, residues 1–16 (MTNKVNSYGWKALIGS) are cytoplasmic. The chain crosses the membrane as a helical span at residues 17–37 (AVGYGMDGFDLLILGFMLSAI). Residues 38–48 (SADLNLTPAQG) lie on the Periplasmic side of the membrane. A helical membrane pass occupies residues 49–69 (GSLVTWTLIGAVFGGILFGAL). Residues 70 to 77 (SDKYGRVR) lie on the Cytoplasmic side of the membrane. The helical transmembrane segment at 78 to 98 (VLTWTILLFAVFTGLCAIAQG) threads the bilayer. Over 99–107 (YWDLLIYRT) the chain is Periplasmic. The chain crosses the membrane as a helical span at residues 108–128 (IAGIGLGGEFGIGMALAAEAW). At 129 to 138 (PARHRAKAAS) the chain is on the cytoplasmic side. A helical membrane pass occupies residues 139-159 (YVALGWQVGVLGAALLTPLLL). A topological domain (periplasmic) is located at residue Pro160. Residues 161-181 (HIGWRGMFLVGIFPAFVAWFL) form a helical membrane-spanning segment. Residues 182–224 (RSHLHEPEIFTQKQTALSTQSSFTDKLRSFQLLIKDKATSKIS) lie on the Cytoplasmic side of the membrane. The chain crosses the membrane as a helical span at residues 225–245 (LGIVVLTSVQNFGYYGIMIWL). The Periplasmic segment spans residues 246-261 (PNFLSKQLGFSLTKSG). A helical transmembrane segment spans residues 262–282 (LWTAVTVCGMMAGIWIFGQLA). The Cytoplasmic segment spans residues 283-288 (DRIGRK). The helical transmembrane segment at 289 to 309 (PSFLLFQLGAVISIVVYSQLT) threads the bilayer. The Periplasmic segment spans residues 310–312 (DPD). Residues 313–333 (IMLLAGAFLGMFVNGMLGGYG) traverse the membrane as a helical segment. Over 334–357 (ALMAEAYPTEARATAQNVLFNIGR) the chain is Cytoplasmic. The next 2 membrane-spanning stretches (helical) occupy residues 358-378 (AVGG…SFQT) and 379-399 (AIAL…FLIP). At 400–407 (ELKGKALD) the chain is on the cytoplasmic side.

Belongs to the major facilitator superfamily. Aromatic acid:H(+) symporter (AAHS) (TC 2.A.1.15) family.

The protein resides in the cell inner membrane. The protein is Putative metabolite transport protein HI_1104 of Haemophilus influenzae (strain ATCC 51907 / DSM 11121 / KW20 / Rd).